The sequence spans 163 residues: Calcium-binding protein 2 (163 aa).

Glycine 2 is lipidated: N-myristoyl glycine. 4 consecutive EF-hand domains span residues 21-56 (EEIE…LGYM), 72-89 (GKVD…KLLA), 95-130 (IGVR…LLGE), and 132-163 (LSQR…MMSR). Ca(2+)-binding residues include aspartate 34, aspartate 36, aspartate 38, tyrosine 40, and glutamate 45. Residues aspartate 108, asparagine 110, aspartate 112, cysteine 114, glutamate 119, aspartate 145, asparagine 147, aspartate 149, and glutamate 156 each coordinate Ca(2+).

The protein resides in the cytoplasm. It localises to the perinuclear region. The protein localises to the cell membrane. It is found in the golgi apparatus. Its function is as follows. Required for sound encoding at inner hair cells (IHCs) synapses, likely via inhibition of the inactivation of voltage-gated calcium channel of type 1.3 (Cav1.3) in the IHCs. Required for the normal transfer of light signals through the retina. The polypeptide is Calcium-binding protein 2 (CABP2) (Bos taurus (Bovine)).